Reading from the N-terminus, the 482-residue chain is Docking protein 1 (482 aa).

At Met-1 the chain carries N-acetylmethionine. Residues 4–119 (AVMEGPLFLQ…WVQTLCRTAF (116 aa)) enclose the PH domain. The residue at position 48 (Ser-48) is a Phosphoserine. The 109-residue stretch at 151 to 259 (EGSQFWVTSQ…QQQKAQGKVG (109 aa)) folds into the IRS-type PTB domain. Residues Ser-269 and Ser-290 each carry the phosphoserine modification. The segment at 269-328 (SHDGETEGKTVPPPVPQDPLGSPPALYAEPLDSLRIPPGPSQDSVYSDPLGSTPAGAGEG) is disordered. Phosphotyrosine is present on residues Tyr-295, Tyr-336, Tyr-340, Tyr-361, and Tyr-376. The segment at 353 to 373 (TDSKEDPIYDEPEGLAPAPPR) is disordered. Tyr-397 carries the post-translational modification Phosphotyrosine; by INSR. The segment at 398 to 482 (ELPYNPATDD…RAGVKSEGST (85 aa)) is disordered. A Phosphotyrosine modification is found at Tyr-408. A compositionally biased stretch (pro residues) spans 410–423 (VPPPRSPKPAPAPK). Phosphoserine is present on Ser-415. Residues 432-459 (SGTTRGSGSKGFSSDTALYSQVQKSGTS) are compositionally biased toward polar residues. At Tyr-450 the chain carries Phosphotyrosine.

It belongs to the DOK family. Type A subfamily. In terms of assembly, interacts with RasGAP, INPP5D/SHIP1 and ABL1. Interacts directly with phosphorylated ITGB3. Interacts with SRMS (via the SH2 and SH3 domains). Constitutively tyrosine-phosphorylated. Phosphorylated by TEC. Phosphorylated on tyrosine residues by the insulin receptor kinase. Results in the negative regulation of the insulin signaling pathway. Phosphorylated by LYN. Phosphorylated on tyrosine residues by SRMS. In terms of tissue distribution, expressed in lung, spleen, skeletal muscle and kidney.

It is found in the cytoplasm. Its subcellular location is the nucleus. DOK proteins are enzymatically inert adaptor or scaffolding proteins. They provide a docking platform for the assembly of multimolecular signaling complexes. DOK1 appears to be a negative regulator of the insulin signaling pathway. Modulates integrin activation by competing with talin for the same binding site on ITGB3. The sequence is that of Docking protein 1 (Dok1) from Mus musculus (Mouse).